We begin with the raw amino-acid sequence, 273 residues long: Diaminopimelate epimerase (273 aa).

Asparagine 11 and asparagine 60 together coordinate substrate. Cysteine 69 functions as the Proton donor in the catalytic mechanism. Substrate-binding positions include 70 to 71 (GN), asparagine 181, and 199 to 200 (ER). The active-site Proton acceptor is cysteine 209. 210–211 (GT) contributes to the substrate binding site.

This sequence belongs to the diaminopimelate epimerase family. In terms of assembly, homodimer.

Its subcellular location is the cytoplasm. The enzyme catalyses (2S,6S)-2,6-diaminopimelate = meso-2,6-diaminopimelate. The protein operates within amino-acid biosynthesis; L-lysine biosynthesis via DAP pathway; DL-2,6-diaminopimelate from LL-2,6-diaminopimelate: step 1/1. Functionally, catalyzes the stereoinversion of LL-2,6-diaminopimelate (L,L-DAP) to meso-diaminopimelate (meso-DAP), a precursor of L-lysine and an essential component of the bacterial peptidoglycan. This is Diaminopimelate epimerase from Helicobacter pylori (strain HPAG1).